The chain runs to 150 residues: Large ribosomal subunit protein uL15 (150 aa).

Polar residues predominate over residues 1–15; sequence MNLSNLQPAEGSTHN. The interval 1–52 is disordered; it reads MNLSNLQPAEGSTHNQNKRLGRGEGSGKGGTSARGHKGAKSRSGYSKKIGFE. The segment covering 23 to 32 has biased composition (gly residues); the sequence is GEGSGKGGTS.

The protein belongs to the universal ribosomal protein uL15 family. As to quaternary structure, part of the 50S ribosomal subunit.

Its function is as follows. Binds to the 23S rRNA. In Flavobacterium psychrophilum (strain ATCC 49511 / DSM 21280 / CIP 103535 / JIP02/86), this protein is Large ribosomal subunit protein uL15.